Reading from the N-terminus, the 101-residue chain is Cysteine-rich and transmembrane domain-containing protein B (101 aa).

The segment at 1–80 is disordered; sequence MSQQPPAVGV…PQQQQQQKHS (80 aa). Residues 24-43 show a composition bias toward pro residues; sequence DAYPPPGQPYPQQGYPPPQG. The span at 59-77 shows a compositional bias: low complexity; it reads YPEQGYPQQGYPPQQQQQQ. Residues 78–95 form a helical membrane-spanning segment; sequence KHSPGMLEGCIAALCCYC.

The protein belongs to the CYSTM1 family.

The protein localises to the membrane. The protein is Cysteine-rich and transmembrane domain-containing protein B of Arabidopsis thaliana (Mouse-ear cress).